A 149-amino-acid chain; its full sequence is Transcriptional repressor NrdR (149 aa).

Residues 3–34 (CPFCFAVDTKVIDSRLVGGGSSVRRRRQCLVC) fold into a zinc finger. The 91-residue stretch at 49 to 139 (PRVVKSNDVR…VYRSFEDIKE (91 aa)) folds into the ATP-cone domain.

Belongs to the NrdR family. The cofactor is Zn(2+).

Functionally, negatively regulates transcription of bacterial ribonucleotide reductase nrd genes and operons by binding to NrdR-boxes. This is Transcriptional repressor NrdR from Shigella boydii serotype 18 (strain CDC 3083-94 / BS512).